A 378-amino-acid chain; its full sequence is MRPNKTSLLLALLSILSQANAYEYVNCFSSLPSDFSKADSYNWQSSSHCNSECSAKGASYFALYNHSECYCGDTNPSGSESTSSSCNTYCFGYSSEMCGGEDAYSVYQLDSDTNSNSISSSDSSTESTSASSSTTSSTTSSTTSTTSSTTSSTTSSMASSSTVQNSPESTQAAASISTSQSSSTVTSESSLTSDTLATSSTSSQSQDATSIIYSTTFHTEGGSTIFVTNTITASAQNSGSATGTAGSDSTSGSKTHKKKANVGAIVGGVVGGVVGAVAIALCILLIVRHINMKREQDRMEKEYQEAIKPVEYPDKLYASSFSSNHGPSSGSFEEEHTKGQTDINPFDDSRRISNGTFINGGPGGKNNVLTVVNPDEAD.

An N-terminal signal peptide occupies residues 1–21 (MRPNKTSLLLALLSILSQANA). The WSC domain occupies 22-110 (YEYVNCFSSL…EDAYSVYQLD (89 aa)). Residues 22-264 (YEYVNCFSSL…THKKKANVGA (243 aa)) are Extracellular-facing. N65 carries an N-linked (GlcNAc...) asparagine glycan. Disordered stretches follow at residues 115–201 (SNSI…TSST) and 236–256 (QNSGSATGTAGSDSTSGSKTH). Low complexity predominate over residues 236–253 (QNSGSATGTAGSDSTSGS). Residues 265–285 (IVGGVVGGVVGAVAIALCILL) traverse the membrane as a helical segment. Topologically, residues 286-378 (IVRHINMKRE…LTVVNPDEAD (93 aa)) are cytoplasmic. Positions 318 to 378 (ASSFSSNHGP…LTVVNPDEAD (61 aa)) are disordered. Low complexity predominate over residues 319-331 (SSFSSNHGPSSGS). Residues S331 and S353 each carry the phosphoserine modification.

Post-translationally, glycosylated. Phosphorylated. Phosphorylation serves a negative regulatory role.

Its subcellular location is the cell membrane. In terms of biological role, plays a role during G1 to regulate entering or exiting the cell cycle. Involved in stress responses. Has a role in cell wall integrity signaling. Activates ROM1 or ROM2 catalyzed guanine nucleotide exchange toward RHO1. Important regulator of the actin cytoskeleton rearrangements in conditions of cell wall expansion and membrane stretching. Specifically required for the actin reorganization induced by hypo-osmotic shock. Multicopy suppressor of 1,3-beta-glucan synthase (GS). Activates GS upstream of RHO1. Acts positively on the PKC1-MAPK pathway. Activates transiently SLT2 during alkaline stress, which leads to an increase in the expression of several specific genes. The polypeptide is Protein SLG1 (SLG1) (Saccharomyces cerevisiae (strain ATCC 204508 / S288c) (Baker's yeast)).